Reading from the N-terminus, the 342-residue chain is Holliday junction branch migration complex subunit RuvB (342 aa).

The tract at residues 1-179 is large ATPase domain (RuvB-L); the sequence is MTNILSPEKS…FGIPMRLNFY (179 aa). Residues Ile-18, Arg-19, Gly-60, Lys-63, Thr-64, Thr-65, 126-128, Arg-169, Tyr-179, and Arg-216 contribute to the ATP site; that span reads EDF. A Mg(2+)-binding site is contributed by Thr-64. A small ATPAse domain (RuvB-S) region spans residues 180–250; it reads NTGELKKVLN…ISDFGLNRLE (71 aa). Positions 253-342 are head domain (RuvB-H); sequence RIGLDSNDYR…HQFNIFNENE (90 aa). DNA contacts are provided by Arg-289, Arg-308, and Arg-313.

Belongs to the RuvB family. As to quaternary structure, homohexamer. Forms an RuvA(8)-RuvB(12)-Holliday junction (HJ) complex. HJ DNA is sandwiched between 2 RuvA tetramers; dsDNA enters through RuvA and exits via RuvB. An RuvB hexamer assembles on each DNA strand where it exits the tetramer. Each RuvB hexamer is contacted by two RuvA subunits (via domain III) on 2 adjacent RuvB subunits; this complex drives branch migration. In the full resolvosome a probable DNA-RuvA(4)-RuvB(12)-RuvC(2) complex forms which resolves the HJ.

The protein localises to the cytoplasm. It carries out the reaction ATP + H2O = ADP + phosphate + H(+). In terms of biological role, the RuvA-RuvB-RuvC complex processes Holliday junction (HJ) DNA during genetic recombination and DNA repair, while the RuvA-RuvB complex plays an important role in the rescue of blocked DNA replication forks via replication fork reversal (RFR). RuvA specifically binds to HJ cruciform DNA, conferring on it an open structure. The RuvB hexamer acts as an ATP-dependent pump, pulling dsDNA into and through the RuvAB complex. RuvB forms 2 homohexamers on either side of HJ DNA bound by 1 or 2 RuvA tetramers; 4 subunits per hexamer contact DNA at a time. Coordinated motions by a converter formed by DNA-disengaged RuvB subunits stimulates ATP hydrolysis and nucleotide exchange. Immobilization of the converter enables RuvB to convert the ATP-contained energy into a lever motion, pulling 2 nucleotides of DNA out of the RuvA tetramer per ATP hydrolyzed, thus driving DNA branch migration. The RuvB motors rotate together with the DNA substrate, which together with the progressing nucleotide cycle form the mechanistic basis for DNA recombination by continuous HJ branch migration. Branch migration allows RuvC to scan DNA until it finds its consensus sequence, where it cleaves and resolves cruciform DNA. This Rickettsia conorii (strain ATCC VR-613 / Malish 7) protein is Holliday junction branch migration complex subunit RuvB.